We begin with the raw amino-acid sequence, 208 residues long: Small ribosomal subunit protein uS4 (208 aa).

The S4 RNA-binding domain occupies 99–165 (RRLDNVVFQL…PRLKEILSSL (67 aa)).

The protein belongs to the universal ribosomal protein uS4 family. As to quaternary structure, part of the 30S ribosomal subunit. Contacts protein S5. The interaction surface between S4 and S5 is involved in control of translational fidelity.

One of the primary rRNA binding proteins, it binds directly to 16S rRNA where it nucleates assembly of the body of the 30S subunit. In terms of biological role, with S5 and S12 plays an important role in translational accuracy. This chain is Small ribosomal subunit protein uS4, found in Desulfitobacterium hafniense (strain Y51).